We begin with the raw amino-acid sequence, 219 residues long: Translation initiation factor 6 (219 aa).

Belongs to the eIF-6 family.

Functionally, binds to the 50S ribosomal subunit and prevents its association with the 30S ribosomal subunit to form the 70S initiation complex. This is Translation initiation factor 6 from Methanosarcina mazei (strain ATCC BAA-159 / DSM 3647 / Goe1 / Go1 / JCM 11833 / OCM 88) (Methanosarcina frisia).